The sequence spans 134 residues: Profilin-3 (134 aa).

Residues C13 and C118 are joined by a disulfide bond. Residues 84 to 100 (AVIRGKKGSGGITIKKT) carry the Involved in PIP2 interaction motif. Phosphothreonine is present on T114.

It belongs to the profilin family. Occurs in many kinds of cells as a complex with monomeric actin in a 1:1 ratio. In terms of processing, phosphorylated by MAP kinases.

The protein localises to the cytoplasm. The protein resides in the cytoskeleton. Its function is as follows. Binds to actin and affects the structure of the cytoskeleton. At high concentrations, profilin prevents the polymerization of actin, whereas it enhances it at low concentrations. The sequence is that of Profilin-3 from Olea europaea (Common olive).